The primary structure comprises 438 residues: 23S rRNA (uracil(1939)-C(5))-methyltransferase RlmD (438 aa).

The TRAM domain maps to 11-69; sequence LQPESKHQQVLVEKLDHQGAGIAYLNKKPLFIDGTLPGEEVVTQLTESKSKFARGKLIK. 4 residues coordinate [4Fe-4S] cluster: Cys82, Cys88, Cys91, and Cys169. Positions 272, 301, 306, 322, 349, and 370 each coordinate S-adenosyl-L-methionine. The Nucleophile role is filled by Cys396.

Belongs to the class I-like SAM-binding methyltransferase superfamily. RNA M5U methyltransferase family. RlmD subfamily.

It carries out the reaction uridine(1939) in 23S rRNA + S-adenosyl-L-methionine = 5-methyluridine(1939) in 23S rRNA + S-adenosyl-L-homocysteine + H(+). Catalyzes the formation of 5-methyl-uridine at position 1939 (m5U1939) in 23S rRNA. The polypeptide is 23S rRNA (uracil(1939)-C(5))-methyltransferase RlmD (Vibrio vulnificus (strain CMCP6)).